The sequence spans 157 residues: Small ribosomal subunit protein uS7 (157 aa).

This sequence belongs to the universal ribosomal protein uS7 family. As to quaternary structure, part of the 30S ribosomal subunit. Contacts proteins S9 and S11.

Its function is as follows. One of the primary rRNA binding proteins, it binds directly to 16S rRNA where it nucleates assembly of the head domain of the 30S subunit. Is located at the subunit interface close to the decoding center, probably blocks exit of the E-site tRNA. This Borreliella burgdorferi (strain ATCC 35210 / DSM 4680 / CIP 102532 / B31) (Borrelia burgdorferi) protein is Small ribosomal subunit protein uS7.